The primary structure comprises 158 residues: Transcription factor BTF3 homolog 4 (158 aa).

Lys-5 bears the N6-methyllysine mark. The region spanning 33–98 (TADDKKLQSS…AEAKPITEML (66 aa)) is the NAC-A/B domain. The residue at position 111 (Thr-111) is a Phosphothreonine. The segment at 123–158 (QVLDSKTPKPEDIDEEEDDVPDLVENFDEASKNEAN) is disordered. A compositionally biased stretch (acidic residues) spans 134 to 150 (DIDEEEDDVPDLVENFD).

The protein belongs to the NAC-beta family.

The polypeptide is Transcription factor BTF3 homolog 4 (BTF3L4) (Bos taurus (Bovine)).